We begin with the raw amino-acid sequence, 2488 residues long: MSGISDHDYQVLVNEFNATEDISLLGSRLDQLFEQVADRFPDNTAVIHNESEVTFKQLNSSANILARCLAKRGLQQGDVVGLAVSRSIDLIAAMLAVLKLGAAYVPIDPSFPAERINQMVEDAGLRLILLSGRPTKGLGRWASLCLSVSEARDGSVTDGTNLETEIQTRDLAYVIYTSGSTGRPKGVEISHGAAANFLSSLRKHEPGCSERDRLLAITTISFDMSALELLLPLVSGSAMIVANTSAVKDPRELISLMARHKVTILQATPATWTMLLESGWKGNPRLSKVICGGEPLSRQLADRLLAAADSVWNVYGPSETTYGSVGRVGQGDIVVGNPVANGRIYVLDDNMSPVPIGSEGEVYIGGGSVSNGYRNKAELTRSRFLVNPFHGGVFFRTGDLARFIAPGKLQVVGRIDGVVKIRGHRIDVGDIEAVLVDHANVSEAVVVSRDDRLVAYCVLHAPCHDAASLDGILRPWVAERLPAYMLPTFFVQMDALPLSPSEKVNRKALPDPIEAMQHQTMIQPTSELEQRIQAIWSDILGHDRFGIEDNFFRIGGDSVRIIRMQAALEKQLHRPVPTPKLFEHYTIKALAAYLAGTGRENNNESQAVSQTFAGSHEDIAIVSMACRLPGGVATPEALWQLLQSGGDTIIDVPKDRWDADKLYNADANIDGTSYCRRGGFLDAIYSYDASFFGISPREAQAMDPTHNLMLELCWEGFERSGYTRDQLSGSATGVFLGVSNNATTNGTPPDLKGYSITGSASATMCGRLSHTLGLRGPSLAVDTACSSSLVATHLACNALRQGECSMALAGGVSLLTTPGIHIEFSKLGGLSADGRCRAFSDDTDGTGFSEGAAIIVLKRLSDARRDGDDIHAVLRGTAVMHGGSSAGLTAPSGPGQVALLRNALARAALEPGDIDYVEAHGTATKLGDPIEATALAEVFGTERSGSDPLRIGSAKSNLGHTQAAAGVVGLLKVVLSMNHDTLPRTLHVREPMAAVDWKRTNMELVLQNRPWLPNNNRLRRAGVSAFGIGGTNAHVIVEESPPPAVEETGNITLPSLPATLPFVLSGQGDSALRAQAEKLRLHIESGAGKDSPLRDVAYSLATCRSHLHRRLVVMAGDKAETLEKLASVSSGPTQPLSVNEVGSPTVAMLFTGQGSQLPGMGKDLYAVYPVFRDALDEIAAKFTDLERPLLDIMWAESGSENAALLSRTDFAQPALFALEVSLWKLWQSWGVKPDFLLGHSVGELAAAHAAGVLDLSDACRLVMMRGRLMQAIPRQGKMASVEASSAEVSAAIQELGQHDKVEIAGYNTPLQTVISGHEEAVEATSVYMSKLGRKTKLLDTSHAFHSFHMNGMLDDLRALAQNIRFSPPKMRIISSMTGRLAGAGELERPEYWAQQARNAVRFSDAFQTLAGQGANVFLELGPSAMLCGLGAACLADPGQVGAALWLPSLKPNMNGPLVIQSSLSELHVRHVPVDWAAYFKPFDCKRVMLPTYAFQREDFRPANKASWFDVASLSTGTNDAAPRVQDMMFEINWRRVETKSIQPRGAWGLLCPSGETAWTTEAQRALLATGIQLVAVSKPHEADQLDGLLSLWDSDADTVQMAHGVTALALAQLQEAIRTGLGAPIVWVTRHAVGAGADDRPVNIGAGPLWGLMRAARSEHPELRLRLIDVDEETDRASLSQAIMLADQTEIAVRREQLLMPHMERAGLAAPLPVGQPFVRTDGAVLVTGGLGDLGSRVARRLATAHGVCDLVLVSRQGTNSPGADALVAELAELGAKATIVGCDLADLDSLGSVMQLFTPDRPLRGVVHAAGVVDSGTLSSLTPRKCAAVFAPKVDGLWNLHQLTKHMDLDLFMMFSSISGIIGLPGLGNYAAANSFIDSLAHLRRAQGLPASSVAYGTWAGDGMATTLVPTTRAHLSQLGLGFLPPEAGLEIFEHAVYQGRALTVAAVLDLQRLRAYYEEQGGVPPLLNSMLGGTKVQKPADEVVNLRDLLADAAPEQHSSIVLHMVQATIAKALGYTRAEDVDASRPMQELGIDSLTAILTRNHLATLTGMALPPNIALLYPNLKSLSEFLLCRLMDDVESSTSSPSDTDGATPSTPTSAASCVDMADIRRGVLDSTFQFNNPVSPGVPGTVFVTGATGFVGTFMIHEFLQRRISVYCLVRASGSQEAQQRMITTLKQYGLWRPEHEPLLVSVAGDLSQPLLGLGEVVFDDLASRVDAILHSGALVDWMRPLDDYIGPNVLGTHEVLRLASCGRAKAIHFISTISTLPIHAGYGLAEHDGEYGYGTSKYLAEKMVVAARFRGAKASSYRLPFVAASAASGRFRLDRGDFLNNLVTGSLDLGAFPLINADLSSVLPVDYLCGTIAAIMTEDQERVGEDYDFVNPQALTFKHFFEMMCSVSGGKEMVSFGEWHRRALEYAAAHPTSSLARIATVLDGYNDKTVGSLVSGSPVGKHVLGLDAYRAPPLDEEYVRRYVHCIEAARAKMRT.

The segment at phenylalanine 33 to arginine 422 is adenylation (A) domain. The Carrier 1 domain maps to glutamine 523 to glycine 598. Serine 558 carries the post-translational modification O-(pantetheine 4'-phosphoryl)serine. Positions histidine 616–glutamate 1039 constitute a Ketosynthase family 3 (KS3) domain. Catalysis depends on for beta-ketoacyl synthase activity residues cysteine 785, histidine 920, and histidine 960. Residues leucine 1149–valine 1471 are malonyl-CoA:ACP transacylase (MAT) domain. A ketoreductase (KR) domain region spans residues glycine 1723 to alanine 1901. Residues serine 2002–leucine 2077 enclose the Carrier 2 domain. An O-(pantetheine 4'-phosphoryl)serine modification is found at serine 2037. The tract at residues serine 2084–alanine 2103 is disordered. Positions valine 2136–threonine 2364 are thioester reductase (TE) domain.

It in the N-terminal section; belongs to the NRP synthetase family.

It carries out the reaction L-pipecolate + malonyl-CoA + 2 NADPH + 4 H(+) = (8aS)-octahydroindolizin-1-one + CO2 + 2 NADP(+) + CoA + 2 H2O. The catalysed reaction is L-pipecolate + malonyl-CoA + 3 NADPH + 5 H(+) = (1R,8aS)-octahydroindolizin-1-ol + CO2 + 3 NADP(+) + CoA + 2 H2O. It catalyses the reaction L-pipecolate + malonyl-CoA + 3 NADPH + 5 H(+) = (1S,8aS)-octahydroindolizin-1-ol + CO2 + 3 NADP(+) + CoA + 2 H2O. It functions in the pathway mycotoxin biosynthesis. Its function is as follows. PKS-NRPS hybrid synthetase; part of the gene cluster that mediates the biosynthesis of swainsonine (SW), a cytotoxic fungal alkaloid and a potential cancer therapy drug. Swainsonine production occurs via a multibranched pathway and is dispensable for fungal colonization of plants and infection of insect hosts. The first step of swainsonine biosynthesis is the production of the precursor pipecolic acid (PA) via conversion of L-lysine (Lys) to 1-piperideine-6-carboxylate (P6C) by the aminotransferase swnA, the latter being further reduced to PA by the reductase swnR. PA can be converted from lysine by both the SW biosynthetic cluster and the unclustered genes such as lysine cyclodeaminase. The PKS-NRPS hybrid synthetase swnK uptakes and condensates PA and malonyl-CoA with and without skipping of the ketoreductase (KR) domain in order to produce 3 intermediates, 1-oxoindolizidine, (1S)-1-hydroxyindolizin, and (1R)-1-hydroxyindolizine; with the transisomer (1S)-1-hydroxyindolizin being predominant. The terminal thioester reductase (TE) domain of swnK is involved in reduction of the thioester bond to release the intermediate aldehydes. The oxidoreductase swnN could contribute to the reduction of 1-oxoindolizidine to (1S)-1-hydroxyindolizin and (1R)-1-hydroxyindolizine, contributing to the major route of SW production. The dioxygenase swnH2 would be responsible for the oxidization of (1R)-1-hydroxyindolizine into (1R,2S)-1,2-dihydroxyindolizine and of (1S)-1-hydroxyindolizin to yield both (1R,2S)-1,2-dihydroxyindolizine and (1S,2S)-1,2-dihydroxyindolizine. The dioxygenase swnH1 then performs the conversion of the 1,2-dihydroxyindolizine epimers to SW. The chain is PKS-NRPS hybrid synthetase swnK from Metarhizium robertsii (strain ARSEF 23 / ATCC MYA-3075) (Metarhizium anisopliae (strain ARSEF 23)).